Consider the following 117-residue polypeptide: Ribosome-binding factor A (117 aa).

This sequence belongs to the RbfA family. In terms of assembly, monomer. Binds 30S ribosomal subunits, but not 50S ribosomal subunits or 70S ribosomes.

The protein resides in the cytoplasm. In terms of biological role, one of several proteins that assist in the late maturation steps of the functional core of the 30S ribosomal subunit. Associates with free 30S ribosomal subunits (but not with 30S subunits that are part of 70S ribosomes or polysomes). Required for efficient processing of 16S rRNA. May interact with the 5'-terminal helix region of 16S rRNA. This chain is Ribosome-binding factor A, found in Lactiplantibacillus plantarum (strain ATCC BAA-793 / NCIMB 8826 / WCFS1) (Lactobacillus plantarum).